Reading from the N-terminus, the 685-residue chain is Mitotic interactor and substrate of PLK1 (685 aa).

Ser-78 is subject to Phosphoserine; by CDK1. Disordered regions lie at residues 155 to 181 (SGTV…STPL) and 207 to 253 (NKEV…QGKG). Thr-172 is modified (phosphothreonine; by CDK1). Thr-179 bears the Phosphothreonine mark. Phosphoserine; by CDK1 is present on Ser-214. Thr-219 is subject to Phosphothreonine. Position 284 is a phosphoserine; by CDK1 (Ser-284). Thr-287 carries the post-translational modification Phosphothreonine; by CDK1. The interval 345–499 (GRPSLYVQRD…PWKLPRGSPQ (155 aa)) is disordered. Residue Ser-348 is modified to Phosphoserine. Basic and acidic residues predominate over residues 355 to 371 (MVQETQREEDHRREGLH). Phosphothreonine; by CDK1 is present on Thr-377. Ser-382 is subject to Phosphoserine. A compositionally biased stretch (low complexity) spans 392 to 417 (ALSSDSILSPDSILSPAPDARAADPA). Residues Ser-394, Ser-395, and Ser-397 each carry the phosphoserine; by PLK1 modification. 2 positions are modified to phosphoserine: Ser-406 and Ser-436. Over residues 454-469 (SGLSTVDTEAATSPKA) the composition is skewed to polar residues. Ser-477 bears the Phosphoserine; by PLK1 mark. A compositionally biased stretch (polar residues) spans 478-488 (ESSGKPMSTKQ). A phosphoserine mark is found at Ser-547 and Ser-549. Positions 551 to 575 (DLLERERESVLRREREVAEERRNAL) form a coiled coil. Disordered stretches follow at residues 575-607 (LFPE…SYSV) and 629-651 (PVDS…NPSD). A Phosphoserine; by PLK1 modification is found at Ser-581. The residue at position 583 (Thr-583) is a Phosphothreonine. The span at 589 to 607 (DQNSRSSSQASGITGSYSV) shows a compositional bias: polar residues. The residue at position 592 (Ser-592) is a Phosphoserine; by PLK1. Ser-681 bears the Phosphoserine mark.

The protein belongs to the MISP family. In terms of assembly, associates with F-actin. Interacts with DCTN1; this interaction regulates DCTN1 distribution at the cell cortex. Interacts with PTK2/FAK and MAPRE1. Phosphorylated by CDK1 and PLK1. CDK1 is the priming kinase for PLK1 phosphorylation. Phosphorylation by PLK1 is required for proper spindle orientation at metaphase.

The protein localises to the cell junction. Its subcellular location is the focal adhesion. It is found in the cytoplasm. It localises to the cytoskeleton. The protein resides in the cell cortex. Plays a role in mitotic spindle orientation and mitotic progression. Regulates the distribution of dynactin at the cell cortex in a PLK1-dependent manner, thus stabilizing cortical and astral microtubule attachments required for proper mitotic spindle positioning. May link microtubules to the actin cytospkeleton and focal adhesions. May be required for directed cell migration and centrosome orientation. May also be necessary for proper stacking of the Golgi apparatus. The protein is Mitotic interactor and substrate of PLK1 of Pongo abelii (Sumatran orangutan).